A 422-amino-acid polypeptide reads, in one-letter code: MSKKIQAIRGMSDLLPKDSAFWLSLERTIFDLFISYGYQNIRTPIVEKTDTFCRAIGGATDIVEKEMYSWIESGGESLSLNPEGTAGCVRMMIEHNLPREGIQKVFYQGAMFRRERPQKGRYRQFHQVGLEVFGATNAKVDAELMMITHTLWQVLGLKNIVLEINTLGSSETRVAYRKILIAYFNQYKDQLDENSLKRLKTNPLRILDSKNKAMRSLINNAPKLMDYLDKESAQHFEQFKTYLDALNVTYIINTCLVRGLDYYNRTVFEWTTTNLGAQGTICAGGRYDGLVEKMGGIPTPAVGLAIGLERLILLLEVQNLMAIEPTLSIYLVALGEKAQIKSMQIASTLHDALPNVILYNDLTLGSFKSQLKKANKIKAYFALILGEQELNNNQVSIKPLKGQGTQQTMDLEEAIKYLKENK.

It belongs to the class-II aminoacyl-tRNA synthetase family. Homodimer.

The protein localises to the cytoplasm. The enzyme catalyses tRNA(His) + L-histidine + ATP = L-histidyl-tRNA(His) + AMP + diphosphate + H(+). The protein is Histidine--tRNA ligase of Ruthia magnifica subsp. Calyptogena magnifica.